We begin with the raw amino-acid sequence, 112 residues long: Nitrogen regulatory protein P-II 1 (112 aa).

Y51 is modified (O-UMP-tyrosine).

Belongs to the P(II) protein family. As to quaternary structure, homotrimer. In terms of processing, uridylylated/deuridylylated by GlnD.

P-II indirectly controls the transcription of the glutamine synthetase gene (GlnA). P-II prevents NR-II-catalyzed conversion of NR-I to NR-I-phosphate, the transcriptional activator of GlnA. When P-II is uridylylated to P-II-UMP, these events are reversed. When the ratio of Gln to 2-ketoglutarate decreases, P-II is uridylylated to P-II-UMP, which causes the deadenylation of glutamine synthetase by GlnE, so activating the enzyme. This chain is Nitrogen regulatory protein P-II 1 (glnB), found in Escherichia coli O157:H7.